An 86-amino-acid chain; its full sequence is Large ribosomal subunit protein bL27 (86 aa).

It belongs to the bacterial ribosomal protein bL27 family.

This Xanthomonas axonopodis pv. citri (strain 306) protein is Large ribosomal subunit protein bL27.